The chain runs to 108 residues: Thiosulfate sulfurtransferase GlpE (108 aa).

A Rhodanese domain is found at 17-105 (QEKEAVLVDI…WQRQFPAEVA (89 aa)). Cysteine 65 (cysteine persulfide intermediate) is an active-site residue.

This sequence belongs to the GlpE family.

It is found in the cytoplasm. The enzyme catalyses thiosulfate + hydrogen cyanide = thiocyanate + sulfite + 2 H(+). It carries out the reaction thiosulfate + [thioredoxin]-dithiol = [thioredoxin]-disulfide + hydrogen sulfide + sulfite + 2 H(+). Its function is as follows. Transferase that catalyzes the transfer of sulfur from thiosulfate to thiophilic acceptors such as cyanide or dithiols. May function in a CysM-independent thiosulfate assimilation pathway by catalyzing the conversion of thiosulfate to sulfite, which can then be used for L-cysteine biosynthesis. The polypeptide is Thiosulfate sulfurtransferase GlpE (Escherichia coli O157:H7).